Consider the following 103-residue polypeptide: AAFALPAFASFEKDVITPAALEAVLNRKAPLYNIMMENDAILNVIANVKTVISNPVLEEALLKTNHGVNGIPCGESCVWIPCLTSAVGCSCKSKVCYRNSLDN.

The N-terminal stretch at 1 to 9 (AAFALPAFA) is a signal peptide. A propeptide spanning residues 10–69 (SFEKDVITPAALEAVLNRKAPLYNIMMENDAILNVIANVKTVISNPVLEEALLKTNHGVN) is cleaved from the precursor. The segment at residues 70-99 (GIPCGESCVWIPCLTSAVGCSCKSKVCYRN) is a cross-link (cyclopeptide (Gly-Asn)). 3 cysteine pairs are disulfide-bonded: Cys73–Cys89, Cys77–Cys91, and Cys82–Cys96. A propeptide spanning residues 100 to 103 (SLDN) is cleaved from the precursor.

In terms of processing, this is a cyclic peptide.

Functionally, probably participates in a plant defense mechanism. The polypeptide is Cycloviolacin-O9 (Viola biflora (Yellow wood violet)).